A 151-amino-acid chain; its full sequence is Hemoglobin-2 (151 aa).

An N-acetylthreonine modification is found at Thr-2. One can recognise a Globin domain in the interval 3 to 148 (TLTNPQKAAI…ICKTLGDYMK (146 aa)). His-97 contributes to the heme b binding site.

Belongs to the globin family. As to quaternary structure, homotetramer.

The protein localises to the cytoplasm. This chain is Hemoglobin-2, found in Phacoides pectinatus (Thick lucine).